Reading from the N-terminus, the 201-residue chain is uncharacterized protein (201 aa).

Residues Lys15–Gly122 enclose the Bro-N domain.

This is an uncharacterized protein from Haemophilus influenzae (strain ATCC 51907 / DSM 11121 / KW20 / Rd).